The chain runs to 302 residues: 33 kDa chaperonin (302 aa).

2 disulfides stabilise this stretch: cysteine 255–cysteine 257 and cysteine 288–cysteine 291.

Belongs to the HSP33 family. Post-translationally, under oxidizing conditions two disulfide bonds are formed involving the reactive cysteines. Under reducing conditions zinc is bound to the reactive cysteines and the protein is inactive.

Its subcellular location is the cytoplasm. In terms of biological role, redox regulated molecular chaperone. Protects both thermally unfolding and oxidatively damaged proteins from irreversible aggregation. Plays an important role in the bacterial defense system toward oxidative stress. This is 33 kDa chaperonin from Caulobacter vibrioides (strain ATCC 19089 / CIP 103742 / CB 15) (Caulobacter crescentus).